We begin with the raw amino-acid sequence, 430 residues long: MTSVVVVGTQWGDEGKGKITDFLSADAEVIARYQGGDNAGHTIVIDNKKFKLHLIPSGIFFKEKISVIGNGVVVNPKSLVKELAYLHGEGVTTDNLRISDRAHVILPYHIKLDQLQEDAKGDNKIGTTIKGIGPAYMDKAARVGIRIADLLDREVFAERLKINLAEKNRLFEKMYDSTPLEFDDIFEEYYEYGQQIKQYVTDTSVILNDALDAGKRVLFEGAQGVMLDIDQGTYPFVTSSNPVAGGVTIGSGVGPSKINKVVGVCKAYTSRVGDGPFPTELFDEVGDRIREIGKEYGTTTGRPRRVGWFDSVVMRHSRRVSGITNLSLNSIDVLSGLDTVKICVAYDLDGKRIDYYPASLEQLKRCKPIYEELPGWSEDITACRSLDGLPENARNYVRRVGELVGVRISTFSVGPGREQTNILESVWSNI.

Residues 12–18 (GDEGKGK) and 40–42 (GHT) each bind GTP. Asp-13 acts as the Proton acceptor in catalysis. Positions 13 and 40 each coordinate Mg(2+). IMP is bound by residues 13–16 (DEGK), 38–41 (NAGH), Thr-128, Arg-142, Gln-223, Thr-238, and Arg-302. The active-site Proton donor is His-41. A substrate-binding site is contributed by 298-304 (TTTGRPR). Residues Arg-304, 330–332 (SID), and 412–414 (SVG) contribute to the GTP site.

It belongs to the adenylosuccinate synthetase family. In terms of assembly, homodimer. The cofactor is Mg(2+).

It is found in the cytoplasm. The catalysed reaction is IMP + L-aspartate + GTP = N(6)-(1,2-dicarboxyethyl)-AMP + GDP + phosphate + 2 H(+). It functions in the pathway purine metabolism; AMP biosynthesis via de novo pathway; AMP from IMP: step 1/2. Functionally, plays an important role in the de novo pathway of purine nucleotide biosynthesis. Catalyzes the first committed step in the biosynthesis of AMP from IMP. The protein is Adenylosuccinate synthetase of Streptococcus agalactiae serotype Ia (strain ATCC 27591 / A909 / CDC SS700).